The following is a 656-amino-acid chain: tRNA 5-methylaminomethyl-2-thiouridine biosynthesis bifunctional protein MnmC (656 aa).

The tRNA (mnm(5)s(2)U34)-methyltransferase stretch occupies residues 1–236 (MTDPLIPAVL…KRAMLVGHFA (236 aa)). The tract at residues 260 to 656 (IGAGLAGCAV…LRALRQGAVS (397 aa)) is FAD-dependent cmnm(5)s(2)U34 oxidoreductase.

The protein in the N-terminal section; belongs to the methyltransferase superfamily. tRNA (mnm(5)s(2)U34)-methyltransferase family. It in the C-terminal section; belongs to the DAO family. The cofactor is FAD.

The protein resides in the cytoplasm. The catalysed reaction is 5-aminomethyl-2-thiouridine(34) in tRNA + S-adenosyl-L-methionine = 5-methylaminomethyl-2-thiouridine(34) in tRNA + S-adenosyl-L-homocysteine + H(+). In terms of biological role, catalyzes the last two steps in the biosynthesis of 5-methylaminomethyl-2-thiouridine (mnm(5)s(2)U) at the wobble position (U34) in tRNA. Catalyzes the FAD-dependent demodification of cmnm(5)s(2)U34 to nm(5)s(2)U34, followed by the transfer of a methyl group from S-adenosyl-L-methionine to nm(5)s(2)U34, to form mnm(5)s(2)U34. The polypeptide is tRNA 5-methylaminomethyl-2-thiouridine biosynthesis bifunctional protein MnmC (Paraburkholderia phytofirmans (strain DSM 17436 / LMG 22146 / PsJN) (Burkholderia phytofirmans)).